The following is a 568-amino-acid chain: Acyl-CoA ligase gloD (568 aa).

ATP is bound by residues 211-219 (TSGTSGFLK), 352-357 (PGYGLT), Asp436, Arg455, and Lys553. Positions 282–352 (DMQIALKSVQ…QLCPEWEINP (71 aa)) are SBD1. The tract at residues 353-415 (GYGLTESFVC…VRSPSVMKEY (63 aa)) is SBD2.

The protein belongs to the ATP-dependent AMP-binding enzyme family.

It participates in mycotoxin biosynthesis. Its function is as follows. Acyl-CoA ligase; part of the gene cluster that mediates the biosynthesis of pneumocandins, lipohexapeptides of the echinocandin family that prevent fungal cell wall formation by non-competitive inhibition of beta-1,3-glucan synthase. The 10,12-dimethylmyristoyl side chain is synthesized by the reducing polyketide synthase gloL/GLPKS4. The thioesterase gloN/GLHYD exclusively interacts with gloL/GLPKS4 to maintain turnover of the polyketide side chain. The 10R,12S-dimethylmyristic acid is then transferred to the first thiolation domain of the nonribosomal peptide synthetase gloA/GLNRPS4 by the acyl-AMP ligase gloD/GLligase, followed by its acylation to L-ornithine to trigger elongation of the cyclic hexapeptide. L-ornithine, 4R-hydroxyl-L-proline (generated from L-proline by the dioxygenase gloF/GLOXY2), 3S-hydroxyl-L-homotyrosine (generated by gloG/GLHtyB, gloH/GLHtyA, gloI/GLHtyC, gloJ/GLHtyD and hydroxylated at C-3 by the dioxygenase gloM/GLOXY1), 3R-hydroxyl-L-glutamine (generated from L-glutamine probably by the dioxygenase gloE/GLOXY3) and 3S-hydroxyl-L-proline (generated from L-proline by the dioxygenase gloF/GLOXY2 to yield pneumocandin B0), or 3S-hydroxyl-4S-methyl-L-proline (generated from L-leucine by the dioxygenase gloC/GLOXY4 to yield pneumocandin A0) are sequentially added to the growing chain. The last C domain of gloA/GLNRPS4 is proposed to be responsible for cyclization by condensation to form the peptide bond between L-ornithine and 3S-hydroxyl-4S-methyl-L-proline (for pneumocandin A0) or 3S-hydroxyl-L-proline (for pneumocandin B0). Finally, the subsequent C-4 hydroxylation of 3S-hydroxyl-L-homotyrosine and L-ornithine dihydroxylation at C-4 and C-5 are performed by the cytochrome P450 monooxygenases gloP/GLP450-1 and gloO/GLP450-2, respectively. This chain is Acyl-CoA ligase gloD, found in Glarea lozoyensis (strain ATCC 20868 / MF5171).